Consider the following 219-residue polypeptide: Endonuclease V (219 aa).

2 residues coordinate Mg(2+): Asp41 and Asp107.

The protein belongs to the endonuclease V family. Requires Mg(2+) as cofactor.

It is found in the cytoplasm. It carries out the reaction Endonucleolytic cleavage at apurinic or apyrimidinic sites to products with a 5'-phosphate.. Its function is as follows. DNA repair enzyme involved in the repair of deaminated bases. Selectively cleaves double-stranded DNA at the second phosphodiester bond 3' to a deoxyinosine leaving behind the intact lesion on the nicked DNA. The chain is Endonuclease V from Desulfurococcus amylolyticus (strain DSM 18924 / JCM 16383 / VKM B-2413 / 1221n) (Desulfurococcus kamchatkensis).